A 1579-amino-acid polypeptide reads, in one-letter code: MAP kinase kinase kinase SSK2 (1579 aa).

Residues 1-70 (MSHSDYFNYK…HSTQYFRSPN (70 aa)) form a disordered region. Low complexity predominate over residues 21–44 (SSKMRQSSSSSSSRLRSESLGRNS). Residues 45–67 (NTTQARVASSPISPGLHSTQYFR) are compositionally biased toward polar residues. Residues S57, S62, S78, and S118 each carry the phosphoserine modification. Disordered stretches follow at residues 97 to 155 (FFHQ…ESEI) and 190 to 243 (SIMS…GSTT). Over residues 104–118 (SGSSSSSARSSRRPS) the composition is skewed to low complexity. Over residues 127-139 (NPQQSLPKLSTQP) the composition is skewed to polar residues. A compositionally biased stretch (basic and acidic residues) spans 144-155 (KKVEASKTESEI). S290 bears the Phosphoserine mark. The Protein kinase domain occupies 1266–1558 (WQKRNFIGGG…AVELLMDPWI (293 aa)). ATP contacts are provided by residues 1272–1280 (IGGGTFGRV) and K1295. Catalysis depends on D1390, which acts as the Proton acceptor. S1424 carries the post-translational modification Phosphoserine.

It belongs to the protein kinase superfamily. STE Ser/Thr protein kinase family. MAP kinase kinase kinase subfamily. As to quaternary structure, interacts with by SSK1.

The catalysed reaction is L-seryl-[protein] + ATP = O-phospho-L-seryl-[protein] + ADP + H(+). It carries out the reaction L-threonyl-[protein] + ATP = O-phospho-L-threonyl-[protein] + ADP + H(+). In terms of biological role, kinase involved in a signal transduction pathway that is activated by changes in the osmolarity of the extracellular environment. Activates the PBS2 MAP kinase kinase by phosphorylation. This Saccharomyces cerevisiae (strain ATCC 204508 / S288c) (Baker's yeast) protein is MAP kinase kinase kinase SSK2 (SSK2).